The sequence spans 487 residues: Betaine aldehyde dehydrogenase (487 aa).

K(+) is bound by residues Ser-26, Ile-27, and Asp-93. 150–152 (GAW) lines the NAD(+) pocket. The active-site Charge relay system is the Lys-162. NAD(+) is bound by residues 176 to 179 (KPSE) and 229 to 232 (SVPT). Leu-244 is a binding site for K(+). Residue Glu-250 is the Proton acceptor of the active site. Gly-252, Cys-284, and Glu-384 together coordinate NAD(+). Cys-284 (nucleophile) is an active-site residue. Cysteine sulfenic acid (-SOH) is present on Cys-284. Residues Lys-454 and Gly-457 each coordinate K(+). The active-site Charge relay system is Glu-461.

This sequence belongs to the aldehyde dehydrogenase family. In terms of assembly, dimer of dimers. K(+) serves as cofactor.

It catalyses the reaction betaine aldehyde + NAD(+) + H2O = glycine betaine + NADH + 2 H(+). The protein operates within amine and polyamine biosynthesis; betaine biosynthesis via choline pathway; betaine from betaine aldehyde: step 1/1. Its function is as follows. Involved in the biosynthesis of the osmoprotectant glycine betaine. Catalyzes the irreversible oxidation of betaine aldehyde to the corresponding acid. The protein is Betaine aldehyde dehydrogenase of Sinorhizobium fredii (strain NBRC 101917 / NGR234).